The primary structure comprises 397 residues: MSLFARQLQSLTASGIRTQQVRLASTEVSFHTKPCKLHKLDNGPNTSVTLNREDALKYYRDMQVIRRMESAAGNLYKEKKIRGFCHLYSGQEACAVGMKAAMTEGDAVITAYRCHGWTWLLGATVTEVLAELTGRVAGNVHGKGGSMHMYTKNFYGGNGIVGAQQPLGAGVALAMKYREQKNVCVTLYGDGAANQGQLFEATNMAKLWDLPVLFVCENNGFGMGTTAERSSASTEYYTRGDYVPGIWVDGMDILAVREATKWAKEYCDSGKGPLMMEMATYRYHGHSMSDPGTSYRTREEIQEVRKTRDPITGFKDRIITSSLATEEELKAIDKEVRKEVDEALKIATSDGVLPPEALYADIYHNTPAQEIRGATIDETIVQPFKTSADVLKSIGRA.

Residues His86, Tyr112, Arg113, Gly159, Val161, Asp190, Gly191, Ala192, and Asn219 each contribute to the pyruvate site. Residues Tyr112, Arg113, Gly159, Val161, Asp190, Gly191, Ala192, Asn219, and His286 each contribute to the thiamine diphosphate site. Residue Asp190 participates in Mg(2+) binding. Residue Asn219 participates in Mg(2+) binding.

Tetramer of 2 alpha and 2 beta subunits. Requires thiamine diphosphate as cofactor. The cofactor is Mg(2+).

It is found in the mitochondrion matrix. The enzyme catalyses N(6)-[(R)-lipoyl]-L-lysyl-[protein] + pyruvate + H(+) = N(6)-[(R)-S(8)-acetyldihydrolipoyl]-L-lysyl-[protein] + CO2. With respect to regulation, E1 activity is regulated by phosphorylation (inactivation) and dephosphorylation (activation) of the alpha subunit. In terms of biological role, the pyruvate dehydrogenase complex catalyzes the overall conversion of pyruvate to acetyl-CoA and CO(2). It contains multiple copies of three enzymatic components: pyruvate dehydrogenase (E1), dihydrolipoamide acetyltransferase (E2) and lipoamide dehydrogenase (E3). The protein is Probable pyruvate dehydrogenase E1 component subunit alpha, mitochondrial of Caenorhabditis elegans.